The chain runs to 313 residues: MGANSIPTDATIDLDEQISQLMQCKPLSEQQVRALCEKAKEILMDESNVQPVKSPVTICGDIHGQFHDLAELFRIGGMCPDTNYLFMGDYVDRGYYSVETVTLLVALKMRYPQRITILRGNHESRQITQVYGFYDECLRKYGNANVWKIFTDLFDYFPLTALVESEIFCLHGGLSPSIETLDNIRNFDRVQEVPHEGPMCDLLWSDPDDRCGWGISPRGAGYTFGQDISEQFNHTNNLKLIARAHQLVMDGYNWAHEQKVVTIFSAPNYCYRCGNMASILEVDDCRNHTFIQFEPAPRRGEPDVTRRTPDYFL.

4 residues coordinate Mn(2+): aspartate 61, histidine 63, aspartate 89, and asparagine 121. The active-site Proton donor is the histidine 122. Histidine 171 and histidine 245 together coordinate Mn(2+). Leucine 313 carries the post-translational modification Leucine methyl ester.

It belongs to the PPP phosphatase family. PP-2A subfamily. As to quaternary structure, PP2A consists of a common heterodimeric core enzyme, composed of a 36 kDa catalytic subunit (subunit C) and a 65 kDa constant regulatory subunit (subunit A), that associates with a variety of regulatory subunits such as subunits B (the R2/B/PR55/B55, R3/B''/PR72/PR130/PR59 and R5/B'/B56 families). Interacts with ACR4. Interacts with TAP46. Interacts with SIC/RON3. It depends on Mn(2+) as a cofactor. In terms of processing, reversibly methyl esterified on Leu-313 by leucine carboxyl methyltransferase 1 (LCMT1) and pectin methylesterase 1 (PME1). Carboxyl methylation influences the affinity of the catalytic subunit for the different regulatory subunits, thereby modulating the PP2A holoenzyme's substrate specificity, enzyme activity and cellular localization. Phosphorylation of either threonine (by autophosphorylation-activated protein kinase) or tyrosine results in inactivation of the phosphatase. Auto-dephosphorylation has been suggested as a mechanism for reactivation.

It localises to the cytoplasm. It catalyses the reaction O-phospho-L-seryl-[protein] + H2O = L-seryl-[protein] + phosphate. The catalysed reaction is O-phospho-L-threonyl-[protein] + H2O = L-threonyl-[protein] + phosphate. Functions redundantly with PP2A4, and is involved in establishing auxin gradients, apical-basal axis of polarity and root and shoot apical meristem during embryogenesis. May dephosphorylate PIN1 and regulate its subcellular distribution for polar auxin transport. Involved in the regulation of formative cell division in roots by dephosphorylating ACR4 protein kinase. In Arabidopsis thaliana (Mouse-ear cress), this protein is Serine/threonine-protein phosphatase PP2A-3 catalytic subunit.